Reading from the N-terminus, the 189-residue chain is Small ribosomal subunit protein uS5 (189 aa).

The 64-residue stretch at 20–83 (FMDRLVHINR…ESAKRSLIRV (64 aa)) folds into the S5 DRBM domain.

This sequence belongs to the universal ribosomal protein uS5 family. Part of the 30S ribosomal subunit. Contacts proteins S4 and S8.

With S4 and S12 plays an important role in translational accuracy. In terms of biological role, located at the back of the 30S subunit body where it stabilizes the conformation of the head with respect to the body. This Methylocella silvestris (strain DSM 15510 / CIP 108128 / LMG 27833 / NCIMB 13906 / BL2) protein is Small ribosomal subunit protein uS5.